The following is a 500-amino-acid chain: Aspartyl/glutamyl-tRNA(Asn/Gln) amidotransferase subunit B (500 aa).

This sequence belongs to the GatB/GatE family. GatB subfamily. As to quaternary structure, heterotrimer of A, B and C subunits.

The catalysed reaction is L-glutamyl-tRNA(Gln) + L-glutamine + ATP + H2O = L-glutaminyl-tRNA(Gln) + L-glutamate + ADP + phosphate + H(+). The enzyme catalyses L-aspartyl-tRNA(Asn) + L-glutamine + ATP + H2O = L-asparaginyl-tRNA(Asn) + L-glutamate + ADP + phosphate + 2 H(+). In terms of biological role, allows the formation of correctly charged Asn-tRNA(Asn) or Gln-tRNA(Gln) through the transamidation of misacylated Asp-tRNA(Asn) or Glu-tRNA(Gln) in organisms which lack either or both of asparaginyl-tRNA or glutaminyl-tRNA synthetases. The reaction takes place in the presence of glutamine and ATP through an activated phospho-Asp-tRNA(Asn) or phospho-Glu-tRNA(Gln). The polypeptide is Aspartyl/glutamyl-tRNA(Asn/Gln) amidotransferase subunit B (Rhizobium etli (strain CIAT 652)).